A 270-amino-acid chain; its full sequence is UPF0354 protein BCG9842_B0431 (270 aa).

The protein belongs to the UPF0354 family.

In Bacillus cereus (strain G9842), this protein is UPF0354 protein BCG9842_B0431.